Here is a 116-residue protein sequence, read N- to C-terminus: Large ribosomal subunit protein bL19 (116 aa).

This sequence belongs to the bacterial ribosomal protein bL19 family.

Functionally, this protein is located at the 30S-50S ribosomal subunit interface and may play a role in the structure and function of the aminoacyl-tRNA binding site. The sequence is that of Large ribosomal subunit protein bL19 from Streptomyces avermitilis (strain ATCC 31267 / DSM 46492 / JCM 5070 / NBRC 14893 / NCIMB 12804 / NRRL 8165 / MA-4680).